A 384-amino-acid polypeptide reads, in one-letter code: PqqA peptide cyclase (384 aa).

The 213-residue stretch at 14–226 (IPAPVGLLAE…IRIVEAARER (213 aa)) folds into the Radical SAM core domain. Cys-28, Cys-32, and Cys-35 together coordinate [4Fe-4S] cluster.

It belongs to the radical SAM superfamily. PqqE family. As to quaternary structure, interacts with PqqD. The interaction is necessary for activity of PqqE. [4Fe-4S] cluster serves as cofactor.

The enzyme catalyses [PQQ precursor protein] + S-adenosyl-L-methionine = E-Y cross-linked-[PQQ precursor protein] + 5'-deoxyadenosine + L-methionine + H(+). It functions in the pathway cofactor biosynthesis; pyrroloquinoline quinone biosynthesis. Its function is as follows. Catalyzes the cross-linking of a glutamate residue and a tyrosine residue in the PqqA protein as part of the biosynthesis of pyrroloquinoline quinone (PQQ). The protein is PqqA peptide cyclase of Methylorubrum populi (strain ATCC BAA-705 / NCIMB 13946 / BJ001) (Methylobacterium populi).